A 206-amino-acid polypeptide reads, in one-letter code: MARYLGPKLKLSRREGTDLFLKSGVRAIDTKCKIDTAPGQHGARKPRLSDYGSQLREKQKVRRIYGILERQFRNYYKEANRLKGNTGENLLVLLEGRLDNVVYRMGFAATRAEARQLVSHKAIVVNGRVVNIPSFQVSVNDVVAVREKSKKQARIKASLELAEQRERPTWLEVEAAKMEGVFKRVPERSDLSADINEHLIVELYSK.

Residues 96–156 enclose the S4 RNA-binding domain; it reads GRLDNVVYRM…EKSKKQARIK (61 aa).

The protein belongs to the universal ribosomal protein uS4 family. In terms of assembly, part of the 30S ribosomal subunit. Contacts protein S5. The interaction surface between S4 and S5 is involved in control of translational fidelity.

In terms of biological role, one of the primary rRNA binding proteins, it binds directly to 16S rRNA where it nucleates assembly of the body of the 30S subunit. With S5 and S12 plays an important role in translational accuracy. This Histophilus somni (strain 129Pt) (Haemophilus somnus) protein is Small ribosomal subunit protein uS4.